Here is a 454-residue protein sequence, read N- to C-terminus: NADH-quinone oxidoreductase subunit H (454 aa).

Transmembrane regions (helical) follow at residues 18 to 38 (WWLVVVKAVFCFAFLMITVLF), 88 to 108 (VVYVLAPIVAAIPAFMAIAVI), 131 to 151 (LPIAMLYILAVASVGIYGIVL), 172 to 192 (MISYEIAMGAAFASVFLYSGS), 206 to 226 (WYIVLLPVSFVIYIVTMVGET), 256 to 276 (FMLAEYVNMVTVSAVSTTLFL), 296 to 316 (WWPMLWFVVKVQLLLFFFIWL), 328 to 348 (LMKLGWKVLIPVSVVWLMLVA), and 360 to 380 (FADIALYVGGGVLVLLLLSFV). The segment at 395 to 454 (AEEPAAFDPMAGGFPVPPLPGQTLPPVPRRRPRRDRELIVSGGPDTASDGPANGKEASDG) is disordered. The span at 409-421 (PVPPLPGQTLPPV) shows a compositional bias: pro residues.

Belongs to the complex I subunit 1 family. In terms of assembly, NDH-1 is composed of 14 different subunits. Subunits NuoA, H, J, K, L, M, N constitute the membrane sector of the complex.

Its subcellular location is the cell membrane. The catalysed reaction is a quinone + NADH + 5 H(+)(in) = a quinol + NAD(+) + 4 H(+)(out). Its function is as follows. NDH-1 shuttles electrons from NADH, via FMN and iron-sulfur (Fe-S) centers, to quinones in the respiratory chain. The immediate electron acceptor for the enzyme in this species is believed to be ubiquinone. Couples the redox reaction to proton translocation (for every two electrons transferred, four hydrogen ions are translocated across the cytoplasmic membrane), and thus conserves the redox energy in a proton gradient. This subunit may bind ubiquinone. The sequence is that of NADH-quinone oxidoreductase subunit H from Streptomyces avermitilis (strain ATCC 31267 / DSM 46492 / JCM 5070 / NBRC 14893 / NCIMB 12804 / NRRL 8165 / MA-4680).